Reading from the N-terminus, the 908-residue chain is Protein translocase subunit SecA (908 aa).

Residues Gln87, 105-109 (GEGKT), and Asp511 contribute to the ATP site. Residues 559–570 (ERHESRRIDNQL) show a composition bias toward basic and acidic residues. Disordered stretches follow at residues 559–582 (ERHE…DPGS) and 841–908 (RRRR…GRLE). Residues 847-856 (LAQQMQRAQA) show a composition bias toward low complexity. A compositionally biased stretch (acidic residues) spans 862-873 (TEEDSDAEEQAE). Zn(2+) is bound by residues Cys892, Cys894, Cys903, and His904. Residues 898 to 908 (KKYKQCHGRLE) show a composition bias toward basic residues.

It belongs to the SecA family. As to quaternary structure, monomer and homodimer. Part of the essential Sec protein translocation apparatus which comprises SecA, SecYEG and auxiliary proteins SecDF-YajC and YidC. Zn(2+) serves as cofactor.

Its subcellular location is the cell inner membrane. The protein localises to the cytoplasm. The enzyme catalyses ATP + H2O + cellular proteinSide 1 = ADP + phosphate + cellular proteinSide 2.. Part of the Sec protein translocase complex. Interacts with the SecYEG preprotein conducting channel. Has a central role in coupling the hydrolysis of ATP to the transfer of proteins into and across the cell membrane, serving both as a receptor for the preprotein-SecB complex and as an ATP-driven molecular motor driving the stepwise translocation of polypeptide chains across the membrane. In Hahella chejuensis (strain KCTC 2396), this protein is Protein translocase subunit SecA.